The sequence spans 163 residues: Late embryogenesis abundant protein Dc3 (163 aa).

2 disordered regions span residues 1–117 (MASH…GGLM) and 139–163 (FGMAGADEEEKTTTTRVTRSSARTE). 3 stretches are compositionally biased toward basic and acidic residues: residues 28–56 (TMKDKAQAAKDKASEMAGSARDRTVESKD), 67–84 (GAVKDKTCETAQAAKEKT), and 91–113 (TKEKASEMGESAKETAVAGKEKT). 6 repeat units span residues 32-42 (KAQAAKDKASE), 43-53 (MAGSARDRTVE), 65-75 (KAGAVKDKTCE), 76-86 (TAQAAKEKTGG), 87-97 (AMQATKEKASE), and 103-115 (KETAVAGKEKTGG). The segment at 32-115 (KAQAAKDKAS…AVAGKEKTGG (84 aa)) is 6 X 11 AA approximate repeats. Low complexity predominate over residues 152–163 (TTRVTRSSARTE).

This sequence belongs to the LEA type 4 family.

The sequence is that of Late embryogenesis abundant protein Dc3 from Daucus carota (Wild carrot).